The sequence spans 145 residues: 3-dehydroquinate dehydratase (145 aa).

Tyr-24 acts as the Proton acceptor in catalysis. Residues Asn-75, His-81, and Asp-88 each coordinate substrate. The active-site Proton donor is His-101. Residues 102 to 103 (IS) and Arg-112 contribute to the substrate site.

This sequence belongs to the type-II 3-dehydroquinase family. In terms of assembly, homododecamer.

The catalysed reaction is 3-dehydroquinate = 3-dehydroshikimate + H2O. It functions in the pathway metabolic intermediate biosynthesis; chorismate biosynthesis; chorismate from D-erythrose 4-phosphate and phosphoenolpyruvate: step 3/7. In terms of biological role, catalyzes a trans-dehydration via an enolate intermediate. The chain is 3-dehydroquinate dehydratase (aroQ) from Corynebacterium glutamicum (strain ATCC 13032 / DSM 20300 / JCM 1318 / BCRC 11384 / CCUG 27702 / LMG 3730 / NBRC 12168 / NCIMB 10025 / NRRL B-2784 / 534).